A 71-amino-acid chain; its full sequence is Large ribosomal subunit protein uL30 (71 aa).

This sequence belongs to the universal ribosomal protein uL30 family. In terms of assembly, part of the 50S ribosomal subunit.

In Borreliella burgdorferi (strain ATCC 35210 / DSM 4680 / CIP 102532 / B31) (Borrelia burgdorferi), this protein is Large ribosomal subunit protein uL30.